A 92-amino-acid polypeptide reads, in one-letter code: Turripeptide UID-02 (92 aa).

An N-terminal signal peptide occupies residues Met-1–Ala-21. Residues Thr-22–Asn-39 constitute a propeptide that is removed on maturation.

In terms of tissue distribution, expressed by the venom duct.

It is found in the secreted. The protein is Turripeptide UID-02 of Gemmula speciosa (Splendid gem-turris).